Reading from the N-terminus, the 401-residue chain is Argininosuccinate synthase (401 aa).

9–17 (AYSGGLDTS) lines the ATP pocket. Position 86 (Tyr-86) interacts with L-citrulline. Position 116 (Gly-116) interacts with ATP. Residues Thr-118, Asn-122, and Asp-123 each coordinate L-aspartate. Asn-122 lines the L-citrulline pocket. Arg-126, Ser-174, Ser-183, Glu-259, and Tyr-271 together coordinate L-citrulline.

Belongs to the argininosuccinate synthase family. Type 1 subfamily. As to quaternary structure, homotetramer.

The protein localises to the cytoplasm. It catalyses the reaction L-citrulline + L-aspartate + ATP = 2-(N(omega)-L-arginino)succinate + AMP + diphosphate + H(+). Its pathway is amino-acid biosynthesis; L-arginine biosynthesis; L-arginine from L-ornithine and carbamoyl phosphate: step 2/3. The chain is Argininosuccinate synthase from Bacillus cereus (strain AH187).